The primary structure comprises 305 residues: Recombination-associated protein RdgC (305 aa).

Belongs to the RdgC family.

Its subcellular location is the cytoplasm. It is found in the nucleoid. May be involved in recombination. The polypeptide is Recombination-associated protein RdgC (Sodalis glossinidius (strain morsitans)).